Here is a 612-residue protein sequence, read N- to C-terminus: Alpha-glycerophosphate oxidase (612 aa).

Residue 21 to 49 coordinates FAD; the sequence is DLLIIGGGITGAGVALQAAASGLDTGLIE. Residues 398-408 are compositionally biased toward basic and acidic residues; sequence VETSTSEKELD. The tract at residues 398 to 418 is disordered; sequence VETSTSEKELDPSAVSRGSSF.

Belongs to the FAD-dependent glycerol-3-phosphate dehydrogenase family. Requires FAD as cofactor.

It localises to the cytoplasm. It catalyses the reaction sn-glycerol 3-phosphate + O2 = dihydroxyacetone phosphate + H2O2. This Streptococcus pyogenes serotype M18 (strain MGAS8232) protein is Alpha-glycerophosphate oxidase (glpO).